A 306-amino-acid polypeptide reads, in one-letter code: Cytochrome P450 monooxygenase aclO (306 aa).

C237 is a binding site for heme.

The protein belongs to the cytochrome P450 family. Heme serves as cofactor.

It functions in the pathway mycotoxin biosynthesis. Its function is as follows. Cytochrome P450 monooxygenase; part of the gene cluster that mediates the biosynthesis of aspirochlorine (or antibiotic A30641), an unusual halogenated spiro compound with distinctive antifungal properties due to selective inhibition of protein biosynthesis, and which is also active against bacteria, viruses, and murine tumor cells. The non-ribosomal peptide synthetase (NRPS) aclP is responsible the formation of the diketopiperazine (DKP) core from the condensation of 2 phenylalanine residues. One Phe residue is tailored into chlorotyrosine by hydroxylation and chlorination, whereas the second Phe undergoes an unprecedented C-C bond cleavage to be converted into glycine. After formation of the DKP, sulfur is incorporated into the DKP by conjugation with glutathione by aclG, followed by its stepwise degradation to the thiol by aclI, aclJ and aclK, and the dithiol oxidation by aclT. In addition, oxygenases (aclB, aclC, aclL and aclO) and O-methyltransferases (aclM and aclU) act as tailoring enzymes to produce the intermediate dechloroaspirochlorine. Ultimately, chlorination of dechloroaspirochlorine by the halogenase aclH is the last step in the aspirochlorine pathway. This is Cytochrome P450 monooxygenase aclO from Aspergillus oryzae (strain ATCC 42149 / RIB 40) (Yellow koji mold).